The sequence spans 678 residues: DNA ligase (678 aa).

NAD(+) is bound by residues 34 to 38, 83 to 84, and E114; these read DSEYD and SL. K116 serves as the catalytic N6-AMP-lysine intermediate. NAD(+) contacts are provided by R137, E176, K293, and K317. Zn(2+) contacts are provided by C411, C414, C429, and C435. The 85-residue stretch at 594–678 folds into the BRCT domain; it reads PTRQPLNGES…LMAGYGQTLS (85 aa).

This sequence belongs to the NAD-dependent DNA ligase family. LigA subfamily. It depends on Mg(2+) as a cofactor. The cofactor is Mn(2+).

It carries out the reaction NAD(+) + (deoxyribonucleotide)n-3'-hydroxyl + 5'-phospho-(deoxyribonucleotide)m = (deoxyribonucleotide)n+m + AMP + beta-nicotinamide D-nucleotide.. In terms of biological role, DNA ligase that catalyzes the formation of phosphodiester linkages between 5'-phosphoryl and 3'-hydroxyl groups in double-stranded DNA using NAD as a coenzyme and as the energy source for the reaction. It is essential for DNA replication and repair of damaged DNA. The chain is DNA ligase from Acinetobacter baumannii (strain SDF).